Here is a 482-residue protein sequence, read N- to C-terminus: Adenylosuccinate lyase (482 aa).

Substrate contacts are provided by residues 14 to 15 (RY), 82 to 84 (RHD), and 108 to 109 (TS). The active-site Proton donor/acceptor is histidine 156. Glutamine 238 is a binding site for substrate. The active-site Proton donor/acceptor is serine 286. Substrate-binding residues include arginine 300, arginine 326, serine 331, and arginine 335.

This sequence belongs to the lyase 1 family. Adenylosuccinate lyase subfamily. In terms of assembly, homotetramer. Residues from neighboring subunits contribute catalytic and substrate-binding residues to each active site.

The enzyme catalyses N(6)-(1,2-dicarboxyethyl)-AMP = fumarate + AMP. The catalysed reaction is (2S)-2-[5-amino-1-(5-phospho-beta-D-ribosyl)imidazole-4-carboxamido]succinate = 5-amino-1-(5-phospho-beta-D-ribosyl)imidazole-4-carboxamide + fumarate. It participates in purine metabolism; AMP biosynthesis via de novo pathway; AMP from IMP: step 2/2. Its pathway is purine metabolism; IMP biosynthesis via de novo pathway; 5-amino-1-(5-phospho-D-ribosyl)imidazole-4-carboxamide from 5-amino-1-(5-phospho-D-ribosyl)imidazole-4-carboxylate: step 2/2. In Schizosaccharomyces pombe (strain 972 / ATCC 24843) (Fission yeast), this protein is Adenylosuccinate lyase (ade8).